A 399-amino-acid polypeptide reads, in one-letter code: Phospholipase C (399 aa).

A signal peptide spans 1–28 (MNKKKILKFICSAVLSFTLFSGYKSYAW). Residues Trp28, His38, Asp83, His95, His153, Asp157, His163, His175, and Glu179 each contribute to the Zn(2+) site. The 249-residue stretch at 29-277 (DGKVDGTGTH…NEVSGTINTT (249 aa)) folds into the Zn-dependent PLC domain. Residues 275–282 (NTTENSKI) form a linker region. Residues 283–399 (NEIMVVIKTA…DNKTFYINNK (117 aa)) form the PLAT domain. Ca(2+) is bound by residues Gly298, Thr299, Asp300, Asp320, Asn321, Gly323, Asn324, Asp325, and Asp363.

This sequence belongs to the bacterial zinc-metallophospholipase C family. Ca(2+) is required as a cofactor. It depends on Zn(2+) as a cofactor.

Its subcellular location is the secreted. The catalysed reaction is a 1,2-diacyl-sn-glycero-3-phosphocholine + H2O = phosphocholine + a 1,2-diacyl-sn-glycerol + H(+). In terms of biological role, bacterial hemolysins are exotoxins that attack blood cell membranes and cause cell rupture. Binds to eukaryotic membranes where it hydrolyzes phosphatidylcholine, sphingomyelin and phosphatidylethanolamine. The diacylglycerol produced can activate both the arachidonic acid pathway, leading to modulation of the inflammatory response cascade and thrombosis, and protein kinase C, leading to activation of eukaryotic phospholipases and further membrane damage. This Clostridium haemolyticum protein is Phospholipase C (plc).